The primary structure comprises 412 residues: Multifunctional CCA protein (412 aa).

Residues Gly-8 and Arg-11 each contribute to the ATP site. The CTP site is built by Gly-8 and Arg-11. Mg(2+) contacts are provided by Asp-21 and Asp-23. Residues Arg-91, Arg-137, and Arg-140 each coordinate ATP. Residues Arg-91, Arg-137, and Arg-140 each coordinate CTP. Positions 228-329 constitute an HD domain; sequence TGIHTMMVLE…VKLFDKADFW (102 aa).

It belongs to the tRNA nucleotidyltransferase/poly(A) polymerase family. Bacterial CCA-adding enzyme type 1 subfamily. Monomer. Can also form homodimers and oligomers. It depends on Mg(2+) as a cofactor. Requires Ni(2+) as cofactor.

It carries out the reaction a tRNA precursor + 2 CTP + ATP = a tRNA with a 3' CCA end + 3 diphosphate. The catalysed reaction is a tRNA with a 3' CCA end + 2 CTP + ATP = a tRNA with a 3' CCACCA end + 3 diphosphate. Catalyzes the addition and repair of the essential 3'-terminal CCA sequence in tRNAs without using a nucleic acid template. Adds these three nucleotides in the order of C, C, and A to the tRNA nucleotide-73, using CTP and ATP as substrates and producing inorganic pyrophosphate. tRNA 3'-terminal CCA addition is required both for tRNA processing and repair. Also involved in tRNA surveillance by mediating tandem CCA addition to generate a CCACCA at the 3' terminus of unstable tRNAs. While stable tRNAs receive only 3'-terminal CCA, unstable tRNAs are marked with CCACCA and rapidly degraded. The chain is Multifunctional CCA protein from Shewanella pealeana (strain ATCC 700345 / ANG-SQ1).